Consider the following 270-residue polypeptide: tRNA pseudouridine synthase A (270 aa).

The active-site Nucleophile is Asp60. The interval 107-111 is RNA binding; sequence FHARF. Tyr118 provides a ligand contact to substrate. The segment at 168–172 is interaction with tRNA; that stretch reads QCQSR.

The protein belongs to the tRNA pseudouridine synthase TruA family. In terms of assembly, homodimer.

It catalyses the reaction uridine(38/39/40) in tRNA = pseudouridine(38/39/40) in tRNA. Its function is as follows. Formation of pseudouridine at positions 38, 39 and 40 in the anticodon stem and loop of transfer RNAs. The chain is tRNA pseudouridine synthase A from Enterobacter sp. (strain 638).